The primary structure comprises 295 residues: Pyridoxal 5'-phosphate synthase subunit PdxS (295 aa).

Position 25 (D25) interacts with D-ribose 5-phosphate. The Schiff-base intermediate with D-ribose 5-phosphate role is filled by K82. A D-ribose 5-phosphate-binding site is contributed by G154. R166 is a binding site for D-glyceraldehyde 3-phosphate. D-ribose 5-phosphate contacts are provided by residues G215 and 236–237 (GS).

The protein belongs to the PdxS/SNZ family. As to quaternary structure, in the presence of PdxT, forms a dodecamer of heterodimers.

The catalysed reaction is aldehydo-D-ribose 5-phosphate + D-glyceraldehyde 3-phosphate + L-glutamine = pyridoxal 5'-phosphate + L-glutamate + phosphate + 3 H2O + H(+). Its pathway is cofactor biosynthesis; pyridoxal 5'-phosphate biosynthesis. Catalyzes the formation of pyridoxal 5'-phosphate from ribose 5-phosphate (RBP), glyceraldehyde 3-phosphate (G3P) and ammonia. The ammonia is provided by the PdxT subunit. Can also use ribulose 5-phosphate and dihydroxyacetone phosphate as substrates, resulting from enzyme-catalyzed isomerization of RBP and G3P, respectively. In Shouchella clausii (strain KSM-K16) (Alkalihalobacillus clausii), this protein is Pyridoxal 5'-phosphate synthase subunit PdxS.